A 261-amino-acid chain; its full sequence is uncharacterized protein (261 aa).

The protein belongs to the PaiB family.

This is an uncharacterized protein from Aspergillus fumigatus (strain ATCC MYA-4609 / CBS 101355 / FGSC A1100 / Af293) (Neosartorya fumigata).